The primary structure comprises 125 residues: Large ribosomal subunit protein eL8 (125 aa).

This sequence belongs to the eukaryotic ribosomal protein eL8 family. Part of the 50S ribosomal subunit. Probably part of the RNase P complex.

The protein localises to the cytoplasm. Its function is as follows. Multifunctional RNA-binding protein that recognizes the K-turn motif in ribosomal RNA, the RNA component of RNase P, box H/ACA, box C/D and box C'/D' sRNAs. In Metallosphaera sedula (strain ATCC 51363 / DSM 5348 / JCM 9185 / NBRC 15509 / TH2), this protein is Large ribosomal subunit protein eL8.